Here is a 308-residue protein sequence, read N- to C-terminus: PAK4-inhibitor inka1 (308 aa).

The segment at 81-105 (EEEESASDPSAVSSPSSERSLEFDS) is disordered. Low complexity predominate over residues 87-98 (SDPSAVSSPSSE). 2 inka box regions span residues 164-201 (DPEDWTTSLLTRGRNRQPLVLGDNSFADLIHNWMDLPE) and 281-308 (DTDYYQFSALMKSGSRTPIVCNDIIGYI).

It belongs to the INKA family. Interacts with pak4/pak5.

The protein resides in the nucleus. The protein localises to the cytoplasm. Inhibitor of the serine/threonine-protein kinase pak4/pak5. Acts by binding pak4/pak5 in a substrate-like manner, inhibiting the protein kinase activity. Required for the proper migration of neural crest cells during embryonic development, probably by inhibiting pak4/pak5. This Danio rerio (Zebrafish) protein is PAK4-inhibitor inka1.